We begin with the raw amino-acid sequence, 227 residues long: PKHD-type hydroxylase Bphyt_7102 (227 aa).

One can recognise a Fe2OG dioxygenase domain in the interval 80 to 179; the sequence is QVYPPLFNRY…RIASFFWVQS (100 aa). 3 residues coordinate Fe cation: H98, D100, and H160. R170 contacts 2-oxoglutarate.

Fe(2+) serves as cofactor. It depends on L-ascorbate as a cofactor.

In Paraburkholderia phytofirmans (strain DSM 17436 / LMG 22146 / PsJN) (Burkholderia phytofirmans), this protein is PKHD-type hydroxylase Bphyt_7102.